The sequence spans 180 residues: Putative methyltransferase YrhH (180 aa).

Belongs to the methyltransferase superfamily.

The protein is Putative methyltransferase YrhH (yrhH) of Bacillus subtilis (strain 168).